We begin with the raw amino-acid sequence, 147 residues long: Hemoglobin subunit beta-2 (147 aa).

The Globin domain occupies 3–147; sequence HWTAEEKATI…LVAALSHGYF (145 aa). Residues His-64 and His-93 each coordinate heme b.

The protein belongs to the globin family. Heterotetramer of two alpha chains and two beta chains. In terms of tissue distribution, red blood cells.

In terms of biological role, this is a larval (tadpole) beta-globin. The chain is Hemoglobin subunit beta-2 (hbb2) from Xenopus tropicalis (Western clawed frog).